The following is a 712-amino-acid chain: Elongation factor G (712 aa).

Residues 8–290 (TRYRNIGISA…AVIEFLPSPT (283 aa)) enclose the tr-type G domain. Residues 17–24 (AHIDAGKT), 88–92 (DTPGH), and 142–145 (NKMD) contribute to the GTP site.

Belongs to the TRAFAC class translation factor GTPase superfamily. Classic translation factor GTPase family. EF-G/EF-2 subfamily.

It is found in the cytoplasm. In terms of biological role, catalyzes the GTP-dependent ribosomal translocation step during translation elongation. During this step, the ribosome changes from the pre-translocational (PRE) to the post-translocational (POST) state as the newly formed A-site-bound peptidyl-tRNA and P-site-bound deacylated tRNA move to the P and E sites, respectively. Catalyzes the coordinated movement of the two tRNA molecules, the mRNA and conformational changes in the ribosome. The sequence is that of Elongation factor G from Acinetobacter baumannii (strain AB307-0294).